We begin with the raw amino-acid sequence, 106 residues long: ATP-dependent Clp protease adapter protein ClpS (106 aa).

Basic and acidic residues predominate over residues 1 to 14; that stretch reads MTDKAGDWQEHGPQ. A disordered region spans residues 1-21; that stretch reads MTDKAGDWQEHGPQVEEAPPQ.

The protein belongs to the ClpS family. As to quaternary structure, binds to the N-terminal domain of the chaperone ClpA.

Involved in the modulation of the specificity of the ClpAP-mediated ATP-dependent protein degradation. The protein is ATP-dependent Clp protease adapter protein ClpS of Alkalilimnicola ehrlichii (strain ATCC BAA-1101 / DSM 17681 / MLHE-1).